The primary structure comprises 167 residues: MNFFEKILVFLGLAEEAEEEIIEDEEDVAPVNNSTFQEKKHKKRSAVQRKQKNSDQEGDSVVPLHSTKNTQGIKIHLIAPSKYEEAQEIGKYLKSGFPVVVNLEQLEMETAKQMIDFVSGTVFALDGNLHKIGQQIFLFSPPNVGIDGAIDTTGDEFFDQKTYEEYE.

Positions 25 to 64 (EEDVAPVNNSTFQEKKHKKRSAVQRKQKNSDQEGDSVVPL) are disordered. The span at 39 to 51 (KKHKKRSAVQRKQ) shows a compositional bias: basic residues.

This sequence belongs to the SepF family. As to quaternary structure, homodimer. Interacts with FtsZ.

Its subcellular location is the cytoplasm. Its function is as follows. Cell division protein that is part of the divisome complex and is recruited early to the Z-ring. Probably stimulates Z-ring formation, perhaps through the cross-linking of FtsZ protofilaments. Its function overlaps with FtsA. The protein is Cell division protein SepF of Natranaerobius thermophilus (strain ATCC BAA-1301 / DSM 18059 / JW/NM-WN-LF).